A 365-amino-acid chain; its full sequence is N5-carboxyaminoimidazole ribonucleotide synthase (365 aa).

ATP contacts are provided by residues R102, K143, 148 to 154 (GYDGKGQ), 177 to 180 (EEYV), E185, and 256 to 257 (NE). In terms of domain architecture, ATP-grasp spans 106 to 286 (KLFYRQHNLP…QFEQHLRAII (181 aa)).

This sequence belongs to the PurK/PurT family. Homodimer.

The catalysed reaction is 5-amino-1-(5-phospho-beta-D-ribosyl)imidazole + hydrogencarbonate + ATP = 5-carboxyamino-1-(5-phospho-D-ribosyl)imidazole + ADP + phosphate + 2 H(+). The protein operates within purine metabolism; IMP biosynthesis via de novo pathway; 5-amino-1-(5-phospho-D-ribosyl)imidazole-4-carboxylate from 5-amino-1-(5-phospho-D-ribosyl)imidazole (N5-CAIR route): step 1/2. In terms of biological role, catalyzes the ATP-dependent conversion of 5-aminoimidazole ribonucleotide (AIR) and HCO(3)(-) to N5-carboxyaminoimidazole ribonucleotide (N5-CAIR). This chain is N5-carboxyaminoimidazole ribonucleotide synthase, found in Saccharolobus solfataricus (strain ATCC 35092 / DSM 1617 / JCM 11322 / P2) (Sulfolobus solfataricus).